A 357-amino-acid polypeptide reads, in one-letter code: UDP-N-acetylglucosamine--N-acetylmuramyl-(pentapeptide) pyrophosphoryl-undecaprenol N-acetylglucosamine transferase (357 aa).

UDP-N-acetyl-alpha-D-glucosamine-binding positions include 12-14 (TGG), N124, R163, S191, I245, 264-269 (ALTVSE), and Q290.

It belongs to the glycosyltransferase 28 family. MurG subfamily.

It is found in the cell inner membrane. The enzyme catalyses di-trans,octa-cis-undecaprenyl diphospho-N-acetyl-alpha-D-muramoyl-L-alanyl-D-glutamyl-meso-2,6-diaminopimeloyl-D-alanyl-D-alanine + UDP-N-acetyl-alpha-D-glucosamine = di-trans,octa-cis-undecaprenyl diphospho-[N-acetyl-alpha-D-glucosaminyl-(1-&gt;4)]-N-acetyl-alpha-D-muramoyl-L-alanyl-D-glutamyl-meso-2,6-diaminopimeloyl-D-alanyl-D-alanine + UDP + H(+). It participates in cell wall biogenesis; peptidoglycan biosynthesis. Its function is as follows. Cell wall formation. Catalyzes the transfer of a GlcNAc subunit on undecaprenyl-pyrophosphoryl-MurNAc-pentapeptide (lipid intermediate I) to form undecaprenyl-pyrophosphoryl-MurNAc-(pentapeptide)GlcNAc (lipid intermediate II). This is UDP-N-acetylglucosamine--N-acetylmuramyl-(pentapeptide) pyrophosphoryl-undecaprenol N-acetylglucosamine transferase from Nitrosospira multiformis (strain ATCC 25196 / NCIMB 11849 / C 71).